The chain runs to 181 residues: Bifunctional adenosylcobalamin biosynthesis protein CobU (181 aa).

GTP contacts are provided by residues 7 to 14 and 31 to 33; these read GGARSGKS and ATS. The active-site GMP-histidine intermediate is the His-47. Residues 48 to 51, Glu-59, and Glu-81 each bind GTP; that span reads KDGR.

This sequence belongs to the CobU/CobP family. Homotrimer.

It catalyses the reaction adenosylcob(III)inamide + GTP = adenosylcob(III)inamide phosphate + GDP + H(+). The catalysed reaction is adenosylcob(III)inamide + ATP = adenosylcob(III)inamide phosphate + ADP + H(+). It carries out the reaction adenosylcob(III)inamide phosphate + GTP + H(+) = adenosylcob(III)inamide-GDP + diphosphate. It functions in the pathway cofactor biosynthesis; adenosylcobalamin biosynthesis; adenosylcobalamin from cob(II)yrinate a,c-diamide: step 5/7. It participates in cofactor biosynthesis; adenosylcobalamin biosynthesis; adenosylcobalamin from cob(II)yrinate a,c-diamide: step 6/7. Its function is as follows. Catalyzes ATP-dependent phosphorylation of adenosylcobinamide and addition of GMP to adenosylcobinamide phosphate. This chain is Bifunctional adenosylcobalamin biosynthesis protein CobU (cobU), found in Salmonella typhimurium (strain LT2 / SGSC1412 / ATCC 700720).